A 136-amino-acid polypeptide reads, in one-letter code: 5-hydroxyisourate hydrolase (136 aa).

A signal peptide spans 1–22 (MKRHILATVIASLVAAPAMALA). Substrate contacts are provided by His-31, Arg-69, and Tyr-133.

This sequence belongs to the transthyretin family. 5-hydroxyisourate hydrolase subfamily. As to quaternary structure, homotetramer.

Its subcellular location is the periplasm. It carries out the reaction 5-hydroxyisourate + H2O = 5-hydroxy-2-oxo-4-ureido-2,5-dihydro-1H-imidazole-5-carboxylate + H(+). Its function is as follows. Catalyzes the hydrolysis of 5-hydroxyisourate (HIU) to 2-oxo-4-hydroxy-4-carboxy-5-ureidoimidazoline (OHCU). This chain is 5-hydroxyisourate hydrolase (hiuH), found in Salmonella dublin.